Reading from the N-terminus, the 199-residue chain is MLFEHLQYYGVSRKIIEAMNKVDRKLFVPSELQESAYLDIPLPIGYGQTISAPHMVGMMCEYLELKDGDRVLEIGTGSGYNAAVMSLLVGESGWIYTIERIPELVQEAQKRINLLGINNITIIVGDGKEGLEEYAPFDKITVTCYAKHIPKKLIEQLKDNGIMVIPVGNEYVQILKLIRKSGEKIIEEDLTHVRFVPMQ.

Ser51 is an active-site residue.

The protein belongs to the methyltransferase superfamily. L-isoaspartyl/D-aspartyl protein methyltransferase family.

The protein localises to the cytoplasm. It carries out the reaction [protein]-L-isoaspartate + S-adenosyl-L-methionine = [protein]-L-isoaspartate alpha-methyl ester + S-adenosyl-L-homocysteine. Functionally, catalyzes the methyl esterification of L-isoaspartyl residues in peptides and proteins that result from spontaneous decomposition of normal L-aspartyl and L-asparaginyl residues. It plays a role in the repair and/or degradation of damaged proteins. The protein is Protein-L-isoaspartate O-methyltransferase of Fervidobacterium nodosum (strain ATCC 35602 / DSM 5306 / Rt17-B1).